The following is a 394-amino-acid chain: NAD(P)H-quinone oxidoreductase subunit H (394 aa).

This sequence belongs to the complex I 49 kDa subunit family. NDH-1 can be composed of about 15 different subunits; different subcomplexes with different compositions have been identified which probably have different functions.

It is found in the cellular thylakoid membrane. The catalysed reaction is a plastoquinone + NADH + (n+1) H(+)(in) = a plastoquinol + NAD(+) + n H(+)(out). The enzyme catalyses a plastoquinone + NADPH + (n+1) H(+)(in) = a plastoquinol + NADP(+) + n H(+)(out). NDH-1 shuttles electrons from an unknown electron donor, via FMN and iron-sulfur (Fe-S) centers, to quinones in the respiratory and/or the photosynthetic chain. The immediate electron acceptor for the enzyme in this species is believed to be plastoquinone. Couples the redox reaction to proton translocation, and thus conserves the redox energy in a proton gradient. Cyanobacterial NDH-1 also plays a role in inorganic carbon-concentration. In Synechococcus sp. (strain WH7803), this protein is NAD(P)H-quinone oxidoreductase subunit H.